Here is a 208-residue protein sequence, read N- to C-terminus: Large ribosomal subunit protein uL4 (208 aa).

A disordered region spans residues arginine 45–isoleucine 78.

This sequence belongs to the universal ribosomal protein uL4 family. Part of the 50S ribosomal subunit.

Its function is as follows. One of the primary rRNA binding proteins, this protein initially binds near the 5'-end of the 23S rRNA. It is important during the early stages of 50S assembly. It makes multiple contacts with different domains of the 23S rRNA in the assembled 50S subunit and ribosome. Functionally, forms part of the polypeptide exit tunnel. The sequence is that of Large ribosomal subunit protein uL4 from Azobacteroides pseudotrichonymphae genomovar. CFP2.